Here is a 31-residue protein sequence, read N- to C-terminus: U13-ctenitoxin-Pn1b (31 aa).

Intrachain disulfides connect Cys-3–Cys-17, Cys-10–Cys-21, and Cys-16–Cys-30.

Expressed by the venom gland.

It is found in the secreted. Its function is as follows. Acts as a neurotoxin. The polypeptide is U13-ctenitoxin-Pn1b (Phoneutria nigriventer (Brazilian armed spider)).